The primary structure comprises 348 residues: Phosphoribosylformylglycinamidine cyclo-ligase (348 aa).

This sequence belongs to the AIR synthase family.

The protein localises to the cytoplasm. The enzyme catalyses 2-formamido-N(1)-(5-O-phospho-beta-D-ribosyl)acetamidine + ATP = 5-amino-1-(5-phospho-beta-D-ribosyl)imidazole + ADP + phosphate + H(+). Its pathway is purine metabolism; IMP biosynthesis via de novo pathway; 5-amino-1-(5-phospho-D-ribosyl)imidazole from N(2)-formyl-N(1)-(5-phospho-D-ribosyl)glycinamide: step 2/2. The chain is Phosphoribosylformylglycinamidine cyclo-ligase from Geotalea daltonii (strain DSM 22248 / JCM 15807 / FRC-32) (Geobacter daltonii).